Here is a 353-residue protein sequence, read N- to C-terminus: Vomeronasal type-1 receptor 1 (353 aa).

At 1-56 (MVGDTLKLLSPLMTRYFFLLFYSTDSSDLNENQHPLDFDEMAFGKVKSGISFLIQT) the chain is on the extracellular side. Residues 57 to 77 (GVGILGNSFLLCFYNLILFTG) form a helical membrane-spanning segment. Residues 78 to 84 (HKLRPTD) are Cytoplasmic-facing. The chain crosses the membrane as a helical span at residues 85 to 105 (LILSHLALANSMVLFFKGIPQ). Residues 106-132 (TMAAFGLKYLLNDTGCKFVFYYHRVGT) lie on the Extracellular side of the membrane. N-linked (GlcNAc...) asparagine glycosylation occurs at Asn-117. A helical membrane pass occupies residues 133-153 (RVSLSTICLLNGFQAIKLNPS). Residues 154 to 169 (ICRWMEIKIRSPRFID) lie on the Cytoplasmic side of the membrane. The helical transmembrane segment at 170-190 (FCCLLCWVPHVLMNASVLLLV) threads the bilayer. At 191 to 226 (NGPLNSKNSSAKNNYGYCSYKASKRFSSLHAVLYFS) the chain is on the extracellular side. Asn-198 is a glycosylation site (N-linked (GlcNAc...) asparagine). The helical transmembrane segment at 227–247 (PDFMSLGFMVWASGSMVFFLY) threads the bilayer. At 248–274 (RHKQQVQHNHSNRLSCRPSQETRATRT) the chain is on the cytoplasmic side. A helical membrane pass occupies residues 275–295 (IMVLVSSFFVFYSVHSFLTIW). Residues 296–303 (TTVVANPG) are Extracellular-facing. A helical membrane pass occupies residues 304 to 324 (QWIVNNSVLVASYFPSRSPFV). Residues 325–353 (LIMSDTRISQFCFACRTRKTLFPNLVVMP) are Cytoplasmic-facing.

Belongs to the G-protein coupled receptor 1 family.

The protein localises to the cell membrane. Its function is as follows. Putative pheromone receptor. The protein is Vomeronasal type-1 receptor 1 (VN1R1) of Gorilla gorilla gorilla (Western lowland gorilla).